A 214-amino-acid polypeptide reads, in one-letter code: Small ribosomal subunit protein uS4c (214 aa).

Basic residues-rich tracts occupy residues 1-14 (MSRY…KIKR) and 36-46 (LSRPKPKKKSQ). Residues 1 to 46 (MSRYRGPRVKKIKRLGSLPGLTTKKPPIVVRDPRKLSRPKPKKKSQ) form a disordered region. An S4 RNA-binding domain is found at 92–153 (MRLDNTLFRL…KEKSKALIQN (62 aa)).

Belongs to the universal ribosomal protein uS4 family. As to quaternary structure, part of the 30S ribosomal subunit. Contacts protein S5. The interaction surface between S4 and S5 is involved in control of translational fidelity.

It is found in the plastid. The protein localises to the chloroplast. In terms of biological role, one of the primary rRNA binding proteins, it binds directly to 16S rRNA where it nucleates assembly of the body of the 30S subunit. With S5 and S12 plays an important role in translational accuracy. This Pelargonium hortorum (Common geranium) protein is Small ribosomal subunit protein uS4c (rps4).